A 216-amino-acid polypeptide reads, in one-letter code: Peptide methionine sulfoxide reductase MsrA (216 aa).

Cys54 is an active-site residue.

It belongs to the MsrA Met sulfoxide reductase family.

The enzyme catalyses L-methionyl-[protein] + [thioredoxin]-disulfide + H2O = L-methionyl-(S)-S-oxide-[protein] + [thioredoxin]-dithiol. It carries out the reaction [thioredoxin]-disulfide + L-methionine + H2O = L-methionine (S)-S-oxide + [thioredoxin]-dithiol. In terms of biological role, has an important function as a repair enzyme for proteins that have been inactivated by oxidation. Catalyzes the reversible oxidation-reduction of methionine sulfoxide in proteins to methionine. The chain is Peptide methionine sulfoxide reductase MsrA from Xylella fastidiosa (strain M12).